A 1415-amino-acid chain; its full sequence is DNA-directed RNA polymerase subunit beta' (1415 aa).

C72, C74, C87, and C90 together coordinate Zn(2+). Residues D463, D465, and D467 each coordinate Mg(2+). Zn(2+) is bound by residues C811, C885, C892, and C895.

The protein belongs to the RNA polymerase beta' chain family. The RNAP catalytic core consists of 2 alpha, 1 beta, 1 beta' and 1 omega subunit. When a sigma factor is associated with the core the holoenzyme is formed, which can initiate transcription. It depends on Mg(2+) as a cofactor. Zn(2+) is required as a cofactor.

The catalysed reaction is RNA(n) + a ribonucleoside 5'-triphosphate = RNA(n+1) + diphosphate. Its function is as follows. DNA-dependent RNA polymerase catalyzes the transcription of DNA into RNA using the four ribonucleoside triphosphates as substrates. The chain is DNA-directed RNA polymerase subunit beta' from Cereibacter sphaeroides (strain ATCC 17023 / DSM 158 / JCM 6121 / CCUG 31486 / LMG 2827 / NBRC 12203 / NCIMB 8253 / ATH 2.4.1.) (Rhodobacter sphaeroides).